A 197-amino-acid chain; its full sequence is Guanylate kinase (197 aa).

The region spanning 7 to 185 is the Guanylate kinase-like domain; sequence GLIIILSSPS…TLKKIHEIIV (179 aa). 14–21 lines the ATP pocket; it reads SPSGTGKS.

This sequence belongs to the guanylate kinase family.

The protein localises to the cytoplasm. The enzyme catalyses GMP + ATP = GDP + ADP. Functionally, essential for recycling GMP and indirectly, cGMP. This is Guanylate kinase from Rickettsia typhi (strain ATCC VR-144 / Wilmington).